The chain runs to 122 residues: Glycine cleavage system H protein (122 aa).

Residues 22 to 103 (IGIIGISDYA…AFGSWFFKVE (82 aa)) enclose the Lipoyl-binding domain. N6-lipoyllysine is present on Lys63.

It belongs to the GcvH family. As to quaternary structure, the glycine cleavage system is composed of four proteins: P, T, L and H. It depends on (R)-lipoate as a cofactor.

Its function is as follows. The glycine cleavage system catalyzes the degradation of glycine. The H protein shuttles the methylamine group of glycine from the P protein to the T protein. The polypeptide is Glycine cleavage system H protein (Treponema denticola (strain ATCC 35405 / DSM 14222 / CIP 103919 / JCM 8153 / KCTC 15104)).